A 379-amino-acid polypeptide reads, in one-letter code: Homoserine O-succinyltransferase (379 aa).

Residues 51–360 (NAVLICHALS…DAPQGHDAFL (310 aa)) enclose the AB hydrolase-1 domain. Catalysis depends on serine 157, which acts as the Nucleophile. Substrate is bound at residue arginine 227. Catalysis depends on residues aspartate 323 and histidine 356. Aspartate 357 contributes to the substrate binding site.

It belongs to the AB hydrolase superfamily. MetX family. In terms of assembly, homodimer.

The protein localises to the cytoplasm. It catalyses the reaction L-homoserine + succinyl-CoA = O-succinyl-L-homoserine + CoA. Its pathway is amino-acid biosynthesis; L-methionine biosynthesis via de novo pathway; O-succinyl-L-homoserine from L-homoserine: step 1/1. Functionally, transfers a succinyl group from succinyl-CoA to L-homoserine, forming succinyl-L-homoserine. The protein is Homoserine O-succinyltransferase of Stutzerimonas stutzeri (strain A1501) (Pseudomonas stutzeri).